We begin with the raw amino-acid sequence, 307 residues long: Oxygen-dependent coproporphyrinogen-III oxidase (307 aa).

Residue serine 99 coordinates substrate. A divalent metal cation contacts are provided by histidine 103 and histidine 113. The Proton donor role is filled by histidine 113. 115–117 (NVR) contributes to the substrate binding site. 2 residues coordinate a divalent metal cation: histidine 152 and histidine 182. The important for dimerization stretch occupies residues 247 to 282 (YVEFNLVFDRGTLFGLQSGGRTESILLSMPPTAGWR). A substrate-binding site is contributed by 265-267 (GGR).

It belongs to the aerobic coproporphyrinogen-III oxidase family. As to quaternary structure, homodimer. A divalent metal cation serves as cofactor.

The protein localises to the cytoplasm. It catalyses the reaction coproporphyrinogen III + O2 + 2 H(+) = protoporphyrinogen IX + 2 CO2 + 2 H2O. It participates in porphyrin-containing compound metabolism; protoporphyrin-IX biosynthesis; protoporphyrinogen-IX from coproporphyrinogen-III (O2 route): step 1/1. Its function is as follows. Involved in the heme biosynthesis. Catalyzes the aerobic oxidative decarboxylation of propionate groups of rings A and B of coproporphyrinogen-III to yield the vinyl groups in protoporphyrinogen-IX. This chain is Oxygen-dependent coproporphyrinogen-III oxidase, found in Burkholderia pseudomallei (strain 1106a).